We begin with the raw amino-acid sequence, 474 residues long: L-arabinose isomerase (474 aa).

The Mn(2+) site is built by Glu306, Glu331, His348, and His447.

This sequence belongs to the arabinose isomerase family. Mn(2+) is required as a cofactor.

It catalyses the reaction beta-L-arabinopyranose = L-ribulose. Its pathway is carbohydrate degradation; L-arabinose degradation via L-ribulose; D-xylulose 5-phosphate from L-arabinose (bacterial route): step 1/3. Functionally, catalyzes the conversion of L-arabinose to L-ribulose. This chain is L-arabinose isomerase, found in Leuconostoc mesenteroides subsp. mesenteroides (strain ATCC 8293 / DSM 20343 / BCRC 11652 / CCM 1803 / JCM 6124 / NCDO 523 / NBRC 100496 / NCIMB 8023 / NCTC 12954 / NRRL B-1118 / 37Y).